The primary structure comprises 476 residues: Doublesex- and mab-3-related transcription factor 3 (476 aa).

Positions 29–76 form a DNA-binding region, DM; the sequence is CARCRNHGVLSWLKGHKRYCRFKDCTCEKCILIIERQRVMAAQVALRR. 2 disordered regions span residues 89 to 130 and 147 to 195; these read DSLR…RPTA and GTLP…SKNC. Low complexity predominate over residues 102–121; the sequence is DAAATAATASQSSPASQASQ. A compositionally biased stretch (polar residues) spans 165 to 174; the sequence is DSSSTDNTAE. Basic and acidic residues predominate over residues 176–185; that stretch reads FSDKDTDQRS. The region spanning 255-290 is the DMA domain; the sequence is RPPLEVLKKIFPNQKPTVLELILKGCGGDLVSAVEV. Positions 418 to 432 are enriched in polar residues; sequence NSTSVFRSSPVLSSR. Residues 418–476 are disordered; sequence NSTSVFRSSPVLSSRTTEDPRISIPDDGCPIVTKQSIYTEDDYDERSDSSDSRILNTSS.

This sequence belongs to the DMRT family. In terms of tissue distribution, expressed in the ventral spinal cord, in a restrical population of neurons migrating ventrically in the developing spinal cord at 11.5 dpc.

It is found in the nucleus. Its function is as follows. Probable transcription factor that plays a role in configuring the spinal circuits controlling stride in vertebrates. Involved in neuronal specification within specific subdivision of spinal cord neurons and in the development of a coordinated locomotor network controlling limb movements. May regulate transcription during sexual development. The polypeptide is Doublesex- and mab-3-related transcription factor 3 (Dmrt3) (Mus musculus (Mouse)).